Reading from the N-terminus, the 52-residue chain is ALPLDGDQPADQPAERMQDISPELNPLFHPVKRGCCSPWNCIQLRACPCCPN.

A signal peptide is located at residue alanine 1. The propeptide occupies 2 to 33 (LPLDGDQPADQPAERMQDISPELNPLFHPVKR). 3 cysteine pairs are disulfide-bonded: cysteine 35–cysteine 49, cysteine 36–cysteine 47, and cysteine 41–cysteine 50. A 4-hydroxyproline mark is found at proline 38, proline 48, and proline 51. Asparagine 52 carries the asparagine amide modification.

In terms of tissue distribution, expressed by the venom duct.

Its subcellular location is the secreted. In Conus regius (Crown cone), this protein is Conotoxin reg3h.